The primary structure comprises 262 residues: tRNA pseudouridine synthase A (262 aa).

Asp55 acts as the Nucleophile in catalysis. Tyr116 provides a ligand contact to substrate.

It belongs to the tRNA pseudouridine synthase TruA family. Homodimer.

The catalysed reaction is uridine(38/39/40) in tRNA = pseudouridine(38/39/40) in tRNA. Its function is as follows. Formation of pseudouridine at positions 38, 39 and 40 in the anticodon stem and loop of transfer RNAs. The protein is tRNA pseudouridine synthase A of Bdellovibrio bacteriovorus (strain ATCC 15356 / DSM 50701 / NCIMB 9529 / HD100).